Here is a 519-residue protein sequence, read N- to C-terminus: Spermidine/putrescine import ATP-binding protein PotA (519 aa).

The region spanning leucine 6 to isoleucine 401 is the ABC transporter domain. An ATP-binding site is contributed by glycine 39 to threonine 46. The insert stretch occupies residues arginine 107–arginine 270.

Belongs to the ABC transporter superfamily. Spermidine/putrescine importer (TC 3.A.1.11.1) family. The complex is composed of two ATP-binding proteins (PotA), two transmembrane proteins (PotB and PotC) and a solute-binding protein (PotD).

The protein resides in the cell membrane. The catalysed reaction is ATP + H2O + polyamine-[polyamine-binding protein]Side 1 = ADP + phosphate + polyamineSide 2 + [polyamine-binding protein]Side 1.. Part of the ABC transporter complex PotABCD involved in spermidine/putrescine import. Responsible for energy coupling to the transport system. The polypeptide is Spermidine/putrescine import ATP-binding protein PotA (Ureaplasma parvum serovar 3 (strain ATCC 700970)).